The chain runs to 257 residues: Imidazole glycerol phosphate synthase subunit HisF (257 aa).

Catalysis depends on residues Asp-11 and Asp-130.

This sequence belongs to the HisA/HisF family. Heterodimer of HisH and HisF.

It is found in the cytoplasm. It carries out the reaction 5-[(5-phospho-1-deoxy-D-ribulos-1-ylimino)methylamino]-1-(5-phospho-beta-D-ribosyl)imidazole-4-carboxamide + L-glutamine = D-erythro-1-(imidazol-4-yl)glycerol 3-phosphate + 5-amino-1-(5-phospho-beta-D-ribosyl)imidazole-4-carboxamide + L-glutamate + H(+). Its pathway is amino-acid biosynthesis; L-histidine biosynthesis; L-histidine from 5-phospho-alpha-D-ribose 1-diphosphate: step 5/9. IGPS catalyzes the conversion of PRFAR and glutamine to IGP, AICAR and glutamate. The HisF subunit catalyzes the cyclization activity that produces IGP and AICAR from PRFAR using the ammonia provided by the HisH subunit. The chain is Imidazole glycerol phosphate synthase subunit HisF from Shewanella baltica (strain OS155 / ATCC BAA-1091).